Consider the following 205-residue polypeptide: Protease (205 aa).

Active-site residues include histidine 54, aspartate 71, and cysteine 122.

Belongs to the peptidase C5 family. Interacts with protease cofactor pVI-C; this interaction is necessary for protease activation.

It is found in the virion. It localises to the host nucleus. The enzyme catalyses Cleaves proteins of the adenovirus and its host cell at two consensus sites: -Yaa-Xaa-Gly-Gly-|-Xaa- and -Yaa-Xaa-Gly-Xaa-|-Gly- (in which Yaa is Met, Ile or Leu, and Xaa is any amino acid).. Its activity is regulated as follows. Requires DNA and protease cofactor for maximal activation. Inside nascent virions, becomes partially activated by binding to the viral DNA, allowing it to cleave the cofactor that binds to the protease and fully activates it. Actin, like the viral protease cofactor, seems to act as a cofactor in the cleavage of cytokeratin 18 and of actin itself. Its function is as follows. Cleaves viral precursor proteins (pTP, pIIIa, pVI, pVII, pVIII, and pX) inside newly assembled particles giving rise to mature virions. Protease complexed to its cofactor slides along the viral DNA to specifically locate and cleave the viral precursors. Mature virions have a weakened organization compared to the unmature virions, thereby facilitating subsequent uncoating. Without maturation, the particle lacks infectivity and is unable to uncoat. Late in adenovirus infection, in the cytoplasm, may participate in the cytoskeleton destruction. Cleaves host cell cytoskeletal keratins K7 and K18. This is Protease from Homo sapiens (Human).